Reading from the N-terminus, the 437-residue chain is Adenosylmethionine-8-amino-7-oxononanoate aminotransferase (437 aa).

Trp-64 lines the substrate pocket. 124–125 (GS) provides a ligand contact to pyridoxal 5'-phosphate. Tyr-157 provides a ligand contact to substrate. Residue Asp-254 coordinates pyridoxal 5'-phosphate. Residues Lys-283 and Gly-316 each coordinate substrate. The residue at position 283 (Lys-283) is an N6-(pyridoxal phosphate)lysine. Residue 317–318 (PT) coordinates pyridoxal 5'-phosphate. Arg-400 provides a ligand contact to substrate.

The protein belongs to the class-III pyridoxal-phosphate-dependent aminotransferase family. BioA subfamily. In terms of assembly, homodimer. Pyridoxal 5'-phosphate serves as cofactor.

It localises to the cytoplasm. It catalyses the reaction (8S)-8-amino-7-oxononanoate + S-adenosyl-L-methionine = S-adenosyl-4-methylsulfanyl-2-oxobutanoate + (7R,8S)-7,8-diammoniononanoate. It participates in cofactor biosynthesis; biotin biosynthesis; 7,8-diaminononanoate from 8-amino-7-oxononanoate (SAM route): step 1/1. Its function is as follows. Catalyzes the transfer of the alpha-amino group from S-adenosyl-L-methionine (SAM) to 7-keto-8-aminopelargonic acid (KAPA) to form 7,8-diaminopelargonic acid (DAPA). It is the only aminotransferase known to utilize SAM as an amino donor. This is Adenosylmethionine-8-amino-7-oxononanoate aminotransferase (bioA) from Mycobacterium tuberculosis (strain CDC 1551 / Oshkosh).